We begin with the raw amino-acid sequence, 254 residues long: uncharacterized protein (254 aa).

Residues 163-182 (PNKHTQHKRSTRRTSPKDYN) form a disordered region. Residues 166–176 (HTQHKRSTRRT) show a composition bias toward basic residues. Residues 207–227 (AHSAWILIIIIIIIVVILFFF) traverse the membrane as a helical segment.

This sequence belongs to the RL11 family.

It localises to the host membrane. This is an uncharacterized protein from Human cytomegalovirus (strain Merlin) (HHV-5).